We begin with the raw amino-acid sequence, 274 residues long: Serine acetyltransferase (274 aa).

This sequence belongs to the transferase hexapeptide repeat family.

The protein resides in the cytoplasm. The catalysed reaction is L-serine + acetyl-CoA = O-acetyl-L-serine + CoA. The protein operates within amino-acid biosynthesis; L-cysteine biosynthesis; L-cysteine from L-serine: step 1/2. The chain is Serine acetyltransferase (cysE) from Buchnera aphidicola subsp. Acyrthosiphon pisum (strain APS) (Acyrthosiphon pisum symbiotic bacterium).